The primary structure comprises 247 residues: Probable 2-phosphosulfolactate phosphatase (247 aa).

This sequence belongs to the ComB family. Mg(2+) is required as a cofactor.

It catalyses the reaction (2R)-O-phospho-3-sulfolactate + H2O = (2R)-3-sulfolactate + phosphate. The sequence is that of Probable 2-phosphosulfolactate phosphatase from Clostridium perfringens (strain 13 / Type A).